The primary structure comprises 516 residues: GMP synthase [glutamine-hydrolyzing] (516 aa).

The region spanning 5–199 (PIVILDFGSQ…ARKICGITSK (195 aa)) is the Glutamine amidotransferase type-1 domain. The Nucleophile role is filled by cysteine 82. Catalysis depends on residues histidine 173 and glutamate 175. Positions 200–391 (WDMGHFAKEQ…LGLPREMVYR (192 aa)) constitute a GMPS ATP-PPase domain. Residue 227–233 (SGGVDSS) coordinates ATP.

As to quaternary structure, homodimer.

It catalyses the reaction XMP + L-glutamine + ATP + H2O = GMP + L-glutamate + AMP + diphosphate + 2 H(+). It participates in purine metabolism; GMP biosynthesis; GMP from XMP (L-Gln route): step 1/1. Its function is as follows. Catalyzes the synthesis of GMP from XMP. The polypeptide is GMP synthase [glutamine-hydrolyzing] (Nitratiruptor sp. (strain SB155-2)).